We begin with the raw amino-acid sequence, 534 residues long: Zinc finger protein 397 (534 aa).

Phosphoserine is present on Ser-31. The SCAN box domain maps to 50 to 132 (RQQFRKFCYQ…TLLEDLEREF (83 aa)). Residues Lys-55, Lys-171, Lys-202, and Lys-252 each participate in a glycyl lysine isopeptide (Lys-Gly) (interchain with G-Cter in SUMO2) cross-link. A disordered region spans residues 197-242 (DISGEKSQRLSQEPSFGGFSEHKSSLEWQQGSAPGETLRRSPSQRA). 9 consecutive C2H2-type zinc fingers follow at residues 285-307 (YRCDICGHSFKQHSSLTQHQRIH), 313-335 (YKCNQCGKAFSLRSYLIIHQRIH), 341-363 (YECSECGKAFNQSSALIRHRKIH), 369-391 (CKCNECGKAFSQSSYLIIHQRIH), 397-419 (YECNECGKTFSQSSKLIRHQRIH), 425-447 (YECNECGKAFRQSSELITHQRIH), 453-475 (YECNECGKAFSLSSNLIRHQRIH), 481-503 (YQCNECGKTFKRSSALVQHQRIH), and 509-531 (YICSECGKAFRHRSVLTRHQRVH).

Belongs to the krueppel C2H2-type zinc-finger protein family.

The protein localises to the nucleus. Functionally, DNA-dependent transcriptional repressor. The sequence is that of Zinc finger protein 397 (ZNF397) from Bos taurus (Bovine).